The following is a 414-amino-acid chain: Tryptophan-specific transport protein (414 aa).

At 1–15 the chain is on the cytoplasmic side; that stretch reads MATLTTTQTSPSLLG. A helical membrane pass occupies residues 16 to 36; sequence GVVIIGGTIIGAGMFSLPVVM. The Periplasmic portion of the chain corresponds to 37-41; the sequence is SGAWF. A helical transmembrane segment spans residues 42–62; the sequence is FWSMAALIFTWFCMLHSGLMI. The Cytoplasmic segment spans residues 63-88; that stretch reads LEANLNYRIGSSFDTITKDLLGKGWN. A helical membrane pass occupies residues 89–109; the sequence is VVNGISIAFVLYILTYAYISA. At 110–128 the chain is on the periplasmic side; sequence SGSILHHTFAEMSLNVPAR. A helical transmembrane segment spans residues 129 to 149; that stretch reads AAGFGFALLVAFVVWLSTKAV. At 150-151 the chain is on the cytoplasmic side; it reads SR. The chain crosses the membrane as a helical span at residues 152 to 172; the sequence is MTAIVLGAKVITFFLTFGSLL. At 173-193 the chain is on the periplasmic side; it reads GHVQPATLFNVAESNASYAPY. The helical transmembrane segment at 194 to 214 threads the bilayer; it reads LLMTLPFCLASFGYHGNVPSL. The Cytoplasmic portion of the chain corresponds to 215–228; that stretch reads MKYYGKDPKTIVKC. A helical membrane pass occupies residues 229–249; it reads LVYGTLMALALYTIWLLATMG. Over 250 to 285 the chain is Periplasmic; it reads NIPRPEFIGIAEKGGNIDVLVQALSGVLNSRSLDLL. A helical transmembrane segment spans residues 286 to 306; sequence LVVFSNFAVASSFLGVTLGLF. Residues 307–325 are Cytoplasmic-facing; the sequence is DYLADLFGFDDSAVGRLKT. Helical transmembrane passes span 326–346 and 347–367; these read ALLT…GFLY and AIGY…ALLA. Residues 368–386 lie on the Cytoplasmic side of the membrane; it reads RASRKRFGSPKFRVWGGKP. A helical membrane pass occupies residues 387–407; sequence MIALILVFGVGNALVHILSSF. The Periplasmic portion of the chain corresponds to 408-414; it reads NLLPVYQ.

It belongs to the amino acid/polyamine transporter 2 family. Mtr/TnaB/TyrP permease subfamily.

It is found in the cell inner membrane. It carries out the reaction L-tryptophan(in) + H(+)(in) = L-tryptophan(out) + H(+)(out). Involved in the transport of tryptophan into the cell. This Shigella flexneri protein is Tryptophan-specific transport protein (mtr).